The sequence spans 132 residues: FPRL1 inhibitory protein (132 aa).

Positions M1–A28 are cleaved as a signal peptide.

Belongs to the CHIPS/FLIPr family.

The protein localises to the secreted. May be involved in countering the first line of host defense mechanisms. Impairs the leukocyte response to FPRL1 agonists by binding directly to host FPRL1. This chain is FPRL1 inhibitory protein (flr), found in Staphylococcus aureus (strain MW2).